The primary structure comprises 340 residues: Glycerol-3-phosphate dehydrogenase [NAD(P)+] (340 aa).

3 residues coordinate NADPH: Ser14, Trp15, and Lys109. Residues Lys109, Gly140, and Ser142 each coordinate sn-glycerol 3-phosphate. Ala144 provides a ligand contact to NADPH. The sn-glycerol 3-phosphate site is built by Lys195, Asp248, Ser258, Arg259, and Asn260. The Proton acceptor role is filled by Lys195. An NADPH-binding site is contributed by Arg259. NADPH-binding residues include Val283 and Glu285.

Belongs to the NAD-dependent glycerol-3-phosphate dehydrogenase family.

It localises to the cytoplasm. The enzyme catalyses sn-glycerol 3-phosphate + NAD(+) = dihydroxyacetone phosphate + NADH + H(+). It carries out the reaction sn-glycerol 3-phosphate + NADP(+) = dihydroxyacetone phosphate + NADPH + H(+). Its pathway is membrane lipid metabolism; glycerophospholipid metabolism. In terms of biological role, catalyzes the reduction of the glycolytic intermediate dihydroxyacetone phosphate (DHAP) to sn-glycerol 3-phosphate (G3P), the key precursor for phospholipid synthesis. The chain is Glycerol-3-phosphate dehydrogenase [NAD(P)+] from Syntrophobacter fumaroxidans (strain DSM 10017 / MPOB).